A 394-amino-acid polypeptide reads, in one-letter code: Protein maelstrom (394 aa).

The segment at residues 2–69 (APKKQNGFMM…ARRDKRGSLN (68 aa)) is a DNA-binding region (HMG box). Residues 44–93 (TQQRGPYNSDAKDANAARRDKRGSLNGHGQVDKAQREAAESLMDKAQREA) are disordered. Over residues 73–93 (QVDKAQREAAESLMDKAQREA) the composition is skewed to basic and acidic residues.

Belongs to the maelstrom family.

The protein localises to the cytoplasm. Its subcellular location is the nucleus. In terms of biological role, involved both in the piRNA and miRNA metabolic processes. As a component of the meiotic nuage, plays a central role during oogenesis by repressing transposable elements and preventing their mobilization, which is essential for the germline integrity. Repression of transposable elements is mediated via the piRNA metabolic process, which mediates the repression of transposable elements during meiosis by forming complexes composed of piRNAs and Piwi proteins and governs the repression of transposons. As a nuclear component, it is required for proper differentiation in the germline stem cell (GSC) lineage by repressing microRNA-7 (miR-7), thereby acting as an indirect regulator of bag-of-marbles (Bam). Acts by binding to the promoter of miR-7 gene and repressing its expression; miR-7 repression alleviates the Bam repression by miR-7, thereby allowing differentiation in the germline stem cell (GSC) lineage. This chain is Protein maelstrom (mael), found in Drosophila simulans (Fruit fly).